Reading from the N-terminus, the 526-residue chain is Glutamate--cysteine ligase (526 aa).

This sequence belongs to the glutamate--cysteine ligase type 1 family. Type 1 subfamily.

The catalysed reaction is L-cysteine + L-glutamate + ATP = gamma-L-glutamyl-L-cysteine + ADP + phosphate + H(+). The protein operates within sulfur metabolism; glutathione biosynthesis; glutathione from L-cysteine and L-glutamate: step 1/2. The polypeptide is Glutamate--cysteine ligase (Proteus mirabilis (strain HI4320)).